The primary structure comprises 442 residues: Probable carboxypeptidase PABG_01461 (442 aa).

The first 20 residues, 1-20 (MKLQYLVALLSVQAVPPVTA), serve as a signal peptide directing secretion. The N-linked (GlcNAc...) asparagine glycan is linked to N102. D160 lines the Zn(2+) pocket. E192 (proton acceptor) is an active-site residue. E193 lines the Zn(2+) pocket. A glycan (N-linked (GlcNAc...) asparagine) is linked at N343.

The protein belongs to the peptidase M20A family. The cofactor is Zn(2+).

It is found in the secreted. This Paracoccidioides brasiliensis (strain Pb03) protein is Probable carboxypeptidase PABG_01461.